Consider the following 113-residue polypeptide: U11-theraphotoxin-Hhn1a (113 aa).

The signal sequence occupies residues 1–21 (MNTVRVTFLPVFVLAVSLGQA). Residues 22–74 (DKDENRMEMQEKTEQGKSYLDFAENLLLQKLEELEAKLLEEDSEESRNSRQKR) constitute a propeptide that is removed on maturation. Residues 61-83 (EEDSEESRNSRQKRCIGEGVPCD) are disordered. Disulfide bonds link Cys-75–Cys-90, Cys-82–Cys-95, and Cys-89–Cys-110.

The protein belongs to the neurotoxin 14 (magi-1) family. 01 (HNTX-16) subfamily. Expressed by the venom gland.

It is found in the secreted. This is U11-theraphotoxin-Hhn1a from Cyriopagopus hainanus (Chinese bird spider).